Reading from the N-terminus, the 629-residue chain is tRNA uridine 5-carboxymethylaminomethyl modification enzyme MnmG (629 aa).

FAD is bound by residues 13–18, valine 125, and serine 180; that span reads GGGHAG. NAD(+) is bound at residue 273–287; the sequence is GPRYCPSIEDKVMRF. Position 370 (glutamine 370) interacts with FAD.

The protein belongs to the MnmG family. As to quaternary structure, homodimer. Heterotetramer of two MnmE and two MnmG subunits. The cofactor is FAD.

The protein localises to the cytoplasm. Its function is as follows. NAD-binding protein involved in the addition of a carboxymethylaminomethyl (cmnm) group at the wobble position (U34) of certain tRNAs, forming tRNA-cmnm(5)s(2)U34. The polypeptide is tRNA uridine 5-carboxymethylaminomethyl modification enzyme MnmG (Escherichia coli O127:H6 (strain E2348/69 / EPEC)).